A 581-amino-acid polypeptide reads, in one-letter code: Proline--tRNA ligase (581 aa).

Belongs to the class-II aminoacyl-tRNA synthetase family. ProS type 1 subfamily. Homodimer.

The protein resides in the cytoplasm. The enzyme catalyses tRNA(Pro) + L-proline + ATP = L-prolyl-tRNA(Pro) + AMP + diphosphate. Catalyzes the attachment of proline to tRNA(Pro) in a two-step reaction: proline is first activated by ATP to form Pro-AMP and then transferred to the acceptor end of tRNA(Pro). As ProRS can inadvertently accommodate and process non-cognate amino acids such as alanine and cysteine, to avoid such errors it has two additional distinct editing activities against alanine. One activity is designated as 'pretransfer' editing and involves the tRNA(Pro)-independent hydrolysis of activated Ala-AMP. The other activity is designated 'posttransfer' editing and involves deacylation of mischarged Ala-tRNA(Pro). The misacylated Cys-tRNA(Pro) is not edited by ProRS. This is Proline--tRNA ligase from Acidovorax ebreus (strain TPSY) (Diaphorobacter sp. (strain TPSY)).